The sequence spans 219 residues: MQEILKAGDIFKTYGTVDVLKGIDFSVQQGEVVSIVGASGAGKSTLLHILGSLDRPDTGWVKIKDEEISAMNDKTLSAFRNQHIGFIFQFHNLLPEFTAVENVLLPAMIGKRNLKEAENRAKDLLRFLGLDHRFTHYPNQLSGGEQQRVAVARSLINDPLIVFADEPSGNLDTHNAEELHQLFFDLRKTYNQTFVIVTHNEKLADLSDRKVVMQDGVII.

Residues 5–219 (LKAGDIFKTY…KVVMQDGVII (215 aa)) enclose the ABC transporter domain. Position 37–44 (37–44 (GASGAGKS)) interacts with ATP.

Belongs to the ABC transporter superfamily. Lipoprotein translocase (TC 3.A.1.125) family. In terms of assembly, the complex is composed of two ATP-binding proteins (LolD) and two transmembrane proteins (LolC and LolE).

The protein resides in the cell inner membrane. Functionally, part of the ABC transporter complex LolCDE involved in the translocation of mature outer membrane-directed lipoproteins, from the inner membrane to the periplasmic chaperone, LolA. Responsible for the formation of the LolA-lipoprotein complex in an ATP-dependent manner. In Cytophaga hutchinsonii (strain ATCC 33406 / DSM 1761 / CIP 103989 / NBRC 15051 / NCIMB 9469 / D465), this protein is Lipoprotein-releasing system ATP-binding protein LolD.